The chain runs to 564 residues: MLANSASVRILIKGGKVVNDDCTHEADVYIENGIIQQVGRELMIPGGAKVIDATGKLVIPGGIDTSTHFHQTFMNATCVDDFYHGTKAALVGGTTMIIGHVLPDKETSLVEAYEKCRALADPKVCCDYALHVGITWWAPKVKAEMETLVREKGVNSFQMFMTYKDLYMLRDSELYQVFHACRDFGAIPRVHAENGELVAEGAKEALDLGITGPEGIEISHPEELEAEATHRVITIANRTHCPIYLVNVSSISAGDVIAAAKMQGKVVLAETTNAHATLTGLHYYHQDWSHAAAYVTVPPLRLDTNTSTYLMSLLANDTLNIVASDHRPFTTKQKAMGKEDFTKIPHGVSGVQDRMSVVWERGVVGGKMDENRFVAVTSSNAAKILNLYPRKGRIIPGADADVVVWDPEATKTISASTQVQGGDFNLYENMRCHGVPLVTISRGRVVYENGVFMCAEGTGKFCPLRSFPDIVYKKLVQREKTLKVRGVDRTPYLGDVAVVVNPGKKEMGTPLADTPTRPVTRHGGMRDLHESSFSLSGSQIDDHVPKRASARILAPPGGRSSGIW.

Phosphothreonine is present on residues threonine 509 and threonine 514. Phosphoserine is present on residues serine 532 and serine 538. Arginine 559 carries the omega-N-methylarginine modification.

This sequence belongs to the metallo-dependent hydrolases superfamily. Hydantoinase/dihydropyrimidinase family. In terms of assembly, homotetramer, and heterotetramer with other DPYS-like proteins. Interacts with DPYSL2, DPYSL3 and DPYSL4. Interacts with MAP2 and TUBB3. In terms of tissue distribution, highly expressed in embryonic and early postnatal brain and spinal cord.

Its subcellular location is the cytoplasm. Involved in the negative regulation of dendrite outgrowth. The chain is Dihydropyrimidinase-related protein 5 (Dpysl5) from Rattus norvegicus (Rat).